The chain runs to 518 residues: Serine/threonine-protein kinase UL13 (518 aa).

2 disordered regions span residues Met1–Ala22 and Ser39–Pro120. Low complexity predominate over residues Gly44–Pro61. A Protein kinase domain is found at Pro151–Ser518. ATP is bound by residues Gly157–Val165 and Lys176. The active-site Proton acceptor is the Asp277.

Belongs to the protein kinase superfamily. Ser/Thr protein kinase family. In terms of processing, autophosphorylated.

The protein resides in the virion tegument. The protein localises to the host nucleus. The enzyme catalyses L-seryl-[protein] + ATP = O-phospho-L-seryl-[protein] + ADP + H(+). The catalysed reaction is L-threonyl-[protein] + ATP = O-phospho-L-threonyl-[protein] + ADP + H(+). Its function is as follows. Multifunctional serine/threonine kinase that plays a role in several processes including egress of virus particles from the nucleus, modulation of the actin cytoskeleton and regulation of viral and cellular gene expression. Regulates the nuclear localization of viral envelopment factors UL34 and UL31, by phosphorylating the US3 kinase, indicating a role in nuclear egress. Disrupts host nuclear lamins, including LMNA and LMNB1. Phosphorylates the viral Fc receptor composed of glycoproteins E (gE) and I (gI). Phosphorylation of glycoprotein E (gE) by UL13 alters its subcellular localization, from the host early endosome to the plasma membrane. Participates in the transcriptional regulation of cellular and viral mRNAs mainly by phosphorylating the viral transcriptional regulator ICP22. Additional substrates have been identified, including UL41, UL49 or host EF1D. This is Serine/threonine-protein kinase UL13 from Homo sapiens (Human).